The following is a 44-amino-acid chain: Protein PsbN (44 aa).

Residues 6 to 26 (FFFTFFLWFLLLSVTGYSVYV) form a helical membrane-spanning segment.

Belongs to the PsbN family.

The protein resides in the plastid. It localises to the chloroplast thylakoid membrane. Its function is as follows. May play a role in photosystem I and II biogenesis. The protein is Protein PsbN of Chlamydomonas reinhardtii (Chlamydomonas smithii).